Reading from the N-terminus, the 178-residue chain is Large ribosomal subunit protein uL6 (178 aa).

This sequence belongs to the universal ribosomal protein uL6 family. As to quaternary structure, part of the 50S ribosomal subunit.

In terms of biological role, this protein binds to the 23S rRNA, and is important in its secondary structure. It is located near the subunit interface in the base of the L7/L12 stalk, and near the tRNA binding site of the peptidyltransferase center. The polypeptide is Large ribosomal subunit protein uL6 (Corynebacterium diphtheriae (strain ATCC 700971 / NCTC 13129 / Biotype gravis)).